A 435-amino-acid chain; its full sequence is Citrate synthase (435 aa).

Catalysis depends on residues histidine 311 and aspartate 370.

This sequence belongs to the citrate synthase family.

It carries out the reaction oxaloacetate + acetyl-CoA + H2O = citrate + CoA + H(+). It functions in the pathway carbohydrate metabolism; tricarboxylic acid cycle; isocitrate from oxaloacetate: step 1/2. This Rickettsia bellii (strain RML369-C) protein is Citrate synthase (gltA).